We begin with the raw amino-acid sequence, 153 residues long: Ribosome maturation factor RimP (153 aa).

The protein belongs to the RimP family.

Its subcellular location is the cytoplasm. Required for maturation of 30S ribosomal subunits. In Clostridium botulinum (strain 657 / Type Ba4), this protein is Ribosome maturation factor RimP.